The primary structure comprises 355 residues: MNTRSGDAEGDIRGKMIAPVRDGNGGQKRKLVQSNDIQRDEDGGAKRRIIQSSDQKNGKILRGIHGCVSPRCSAPTYQSRFSWYEQDIWTYITRFLDGKSLVKLGATNKWFYKIAMEDTVWRFACLRDLQVPETFPVSSTWIKIYASAFDGSHSYLFHQKEKHIDWMRLGAFVLDSRTSFLTESLSGRLKVPTEGTIEQMLQSSGSCLINDIKSGIWIADLQLLRCPLCDLSTCDGTMQTLDVRHIELFLSEGYKDGSWDYNLIGSHKLEKDASAACGAIFDLKHLKKSSSSGILNLKSWTGEADDSQPKAVIAPHAVAVHTRLQQNEGILVKYHTMKAGTDGDIVSIRISQQLL.

A compositionally biased stretch (basic and acidic residues) spans 1 to 14; sequence MNTRSGDAEGDIRG. Positions 1–44 are disordered; it reads MNTRSGDAEGDIRGKMIAPVRDGNGGQKRKLVQSNDIQRDEDGG. In terms of domain architecture, F-box; degenerate spans 78–124; the sequence is QSRFSWYEQDIWTYITRFLDGKSLVKLGATNKWFYKIAMEDTVWRFA.

The sequence is that of Probable F-box protein At5g36000 from Arabidopsis thaliana (Mouse-ear cress).